The following is a 245-amino-acid chain: 1-(5-phosphoribosyl)-5-[(5-phosphoribosylamino)methylideneamino] imidazole-4-carboxamide isomerase (245 aa).

Residue Asp7 is the Proton acceptor of the active site. Catalysis depends on Asp129, which acts as the Proton donor.

It belongs to the HisA/HisF family.

The protein localises to the cytoplasm. It carries out the reaction 1-(5-phospho-beta-D-ribosyl)-5-[(5-phospho-beta-D-ribosylamino)methylideneamino]imidazole-4-carboxamide = 5-[(5-phospho-1-deoxy-D-ribulos-1-ylimino)methylamino]-1-(5-phospho-beta-D-ribosyl)imidazole-4-carboxamide. Its pathway is amino-acid biosynthesis; L-histidine biosynthesis; L-histidine from 5-phospho-alpha-D-ribose 1-diphosphate: step 4/9. This is 1-(5-phosphoribosyl)-5-[(5-phosphoribosylamino)methylideneamino] imidazole-4-carboxamide isomerase from Escherichia coli (strain 55989 / EAEC).